The chain runs to 252 residues: Segregation and condensation protein A (252 aa).

A disordered region spans residues 117-136 (EREEERQNAFTKPPSDLSEF).

This sequence belongs to the ScpA family. Component of a cohesin-like complex composed of ScpA, ScpB and the Smc homodimer, in which ScpA and ScpB bind to the head domain of Smc. The presence of the three proteins is required for the association of the complex with DNA.

Its subcellular location is the cytoplasm. Functionally, participates in chromosomal partition during cell division. May act via the formation of a condensin-like complex containing Smc and ScpB that pull DNA away from mid-cell into both cell halves. This chain is Segregation and condensation protein A, found in Bacillus pumilus (strain SAFR-032).